Consider the following 51-residue polypeptide: Lantibiotic lacticin-481 (51 aa).

A propeptide spanning residues 1–24 is cleaved from the precursor; it reads MKEQNSFNLLQEVTESELDLILGA. Residues 33 to 38 constitute a cross-link (beta-methyllanthionine (Thr-Cys)); the sequence is TISHEC. 2 consecutive cross-links (lanthionine (Ser-Cys)) follow at residues 35–49 and 42–50; these read SHEC…VFTC and SWQFVFTCC. Thr48 carries the (Z)-2,3-didehydrobutyrine modification.

The protein belongs to the type A lantibiotic family. Monomer or homodimer. Post-translationally, maturation of lantibiotics involves the enzymatic conversion of Thr, and Ser into dehydrated AA and the formation of thioether bonds with cysteine. This is followed by membrane translocation and cleavage of the modified precursor. It is established that the 2,3-didehydrobutyrine is the Z-isomer.

In terms of biological role, lanthionine-containing peptide antibiotic (lantibiotic) active on Gram-positive bacteria. The bactericidal activity of lantibiotics is based on depolarization of energized bacterial cytoplasmic membranes, initiated by the formation of aqueous transmembrane pores. Lacticin 481 is a broad spectrum bacteriocin exhibiting activity against a wide range of lactic acid bacteria and C.tyrobutyricum. This chain is Lantibiotic lacticin-481 (lctA), found in Lactococcus lactis subsp. lactis (Streptococcus lactis).